The sequence spans 337 residues: Glycerol-3-phosphate dehydrogenase [NAD(P)+] (337 aa).

NADPH is bound by residues serine 17, tyrosine 18, histidine 38, and lysine 112. Sn-glycerol 3-phosphate-binding residues include lysine 112, glycine 141, and threonine 143. Residue alanine 145 coordinates NADPH. Sn-glycerol 3-phosphate is bound by residues lysine 197, aspartate 250, serine 260, arginine 261, and asparagine 262. Lysine 197 functions as the Proton acceptor in the catalytic mechanism. An NADPH-binding site is contributed by arginine 261. Valine 285 and glutamate 287 together coordinate NADPH.

Belongs to the NAD-dependent glycerol-3-phosphate dehydrogenase family.

The protein localises to the cytoplasm. The catalysed reaction is sn-glycerol 3-phosphate + NAD(+) = dihydroxyacetone phosphate + NADH + H(+). The enzyme catalyses sn-glycerol 3-phosphate + NADP(+) = dihydroxyacetone phosphate + NADPH + H(+). Its pathway is membrane lipid metabolism; glycerophospholipid metabolism. Functionally, catalyzes the reduction of the glycolytic intermediate dihydroxyacetone phosphate (DHAP) to sn-glycerol 3-phosphate (G3P), the key precursor for phospholipid synthesis. The protein is Glycerol-3-phosphate dehydrogenase [NAD(P)+] of Pasteurella multocida (strain Pm70).